The following is a 251-amino-acid chain: Keratin-associated protein 10-10 (251 aa).

Repeat copies occupy residues 26–30 (CCEPC), 31–35 (CCAPA), 52–56 (CCQTA), 84–88 (CCTSS), 94–98 (CCVPV), 99–103 (CCVPV), 104–109 (CCVPVC), 126–130 (CCQQS), 136–140 (CCTSS), 146–150 (CCVPV), 168–172 (CCQQS), 178–182 (CCTAS), 183–187 (CCRPS), 202–206 (CCVPV), and 220–224 (CCRTA). Positions 26 to 224 (CCEPCCCAPA…SCQPSCCRTA (199 aa)) are 15 X 5 AA repeats of C-C-X(3).

The protein belongs to the KRTAP type 10 family. As to quaternary structure, interacts with hair keratins. As to expression, restricted to a narrow region of the hair fiber cuticle, lying approximately 20 cell layers above the apex of the dermal papilla of the hair root; not detected in any other tissues.

In terms of biological role, in the hair cortex, hair keratin intermediate filaments are embedded in an interfilamentous matrix, consisting of hair keratin-associated proteins (KRTAP), which are essential for the formation of a rigid and resistant hair shaft through their extensive disulfide bond cross-linking with abundant cysteine residues of hair keratins. The matrix proteins include the high-sulfur and high-glycine-tyrosine keratins. The chain is Keratin-associated protein 10-10 (KRTAP10-10) from Homo sapiens (Human).